Here is a 574-residue protein sequence, read N- to C-terminus: Proline--tRNA ligase (574 aa).

Belongs to the class-II aminoacyl-tRNA synthetase family. ProS type 1 subfamily. Homodimer.

It localises to the cytoplasm. It carries out the reaction tRNA(Pro) + L-proline + ATP = L-prolyl-tRNA(Pro) + AMP + diphosphate. Catalyzes the attachment of proline to tRNA(Pro) in a two-step reaction: proline is first activated by ATP to form Pro-AMP and then transferred to the acceptor end of tRNA(Pro). As ProRS can inadvertently accommodate and process non-cognate amino acids such as alanine and cysteine, to avoid such errors it has two additional distinct editing activities against alanine. One activity is designated as 'pretransfer' editing and involves the tRNA(Pro)-independent hydrolysis of activated Ala-AMP. The other activity is designated 'posttransfer' editing and involves deacylation of mischarged Ala-tRNA(Pro). The misacylated Cys-tRNA(Pro) is not edited by ProRS. The chain is Proline--tRNA ligase from Oleidesulfovibrio alaskensis (strain ATCC BAA-1058 / DSM 17464 / G20) (Desulfovibrio alaskensis).